The following is a 953-amino-acid chain: Pyruvate, phosphate dikinase, chloroplastic (953 aa).

The transit peptide at 1–77 (MMSSLSVEGM…VLNPVSPPVT (77 aa)) directs the protein to the chloroplast. The interval 55–74 (PELRSSGLTPPRAVLNPVSP) is disordered. Threonine 533 is subject to Phosphothreonine; by PDRP1. Histidine 535 (tele-phosphohistidine intermediate) is an active-site residue. Positions 641, 698, 827, 848, 849, 850, and 851 each coordinate substrate. Glutamate 827 contributes to the Mg(2+) binding site. Aspartate 851 serves as a coordination point for Mg(2+). Cysteine 913 functions as the Proton donor in the catalytic mechanism.

Belongs to the PEP-utilizing enzyme family. In terms of assembly, homotetramer. Mg(2+) serves as cofactor. Post-translationally, phosphorylation of Thr-533 in the dark inactivates the enzyme. Dephosphorylation upon light stimulation reactivates the enzyme.

The protein resides in the plastid. Its subcellular location is the chloroplast. It catalyses the reaction pyruvate + phosphate + ATP = phosphoenolpyruvate + AMP + diphosphate + H(+). It functions in the pathway photosynthesis; C4 acid pathway. With respect to regulation, activated by light-induced dephosphorylation. Inhibited by dark-induced phosphorylation. Both reactions are catalyzed by PDRP1. Inactivated by cold due to the dissociation of the homotetramer. Functionally, formation of phosphoenolpyruvate, which is the primary acceptor of CO(2) in C4 and some Crassulacean acid metabolism plants. This Flaveria bidentis (Coastal plain yellowtops) protein is Pyruvate, phosphate dikinase, chloroplastic.